The sequence spans 185 residues: MDASEVEFLAEKEQVTVIPNFSLDKVYLIGGDLGPFNPSLPVEVPLWLAINLKQRQKCRIVPPEWMDVEKLEAIRDQERREETFTPMPSPYYMELTKLLLNHAADNIPKADEIRTLVKDTWDTRIAKLRLSADSFVKGQEAHAKLDNLTLMEINTIGTFFTESLNHMYKLRTSLQNPEEGQSQDY.

The protein belongs to the GINS2/PSF2 family. As to quaternary structure, component of the GINS complex which is a heterotetramer of gins1/psf1, gins2/psf2, gins3/psf3 and gins4/sld5. Component of the CMG helicase complex, composed of the mcm2-7 complex, the GINS complex and cdc45.

The protein localises to the nucleus. Its subcellular location is the chromosome. Its function is as follows. Required for correct functioning of the GINS complex, a complex that plays an essential role in the initiation of DNA replication, and progression of DNA replication forks. GINS complex is a core component of CDC45-MCM-GINS (CMG) helicase, the molecular machine that unwinds template DNA during replication, and around which the replisome is built. This chain is DNA replication complex GINS protein PSF2 (gins2), found in Xenopus laevis (African clawed frog).